The following is a 315-amino-acid chain: Ribosomal RNA small subunit methyltransferase H (315 aa).

S-adenosyl-L-methionine contacts are provided by residues 42–44, Asp-59, Phe-96, Asp-108, and Gln-115; that span reads GGH.

The protein belongs to the methyltransferase superfamily. RsmH family.

Its subcellular location is the cytoplasm. It carries out the reaction cytidine(1402) in 16S rRNA + S-adenosyl-L-methionine = N(4)-methylcytidine(1402) in 16S rRNA + S-adenosyl-L-homocysteine + H(+). Its function is as follows. Specifically methylates the N4 position of cytidine in position 1402 (C1402) of 16S rRNA. In Gemmatimonas aurantiaca (strain DSM 14586 / JCM 11422 / NBRC 100505 / T-27), this protein is Ribosomal RNA small subunit methyltransferase H.